The primary structure comprises 162 residues: Large ribosomal subunit protein uL10 (162 aa).

The protein belongs to the universal ribosomal protein uL10 family. Part of the ribosomal stalk of the 50S ribosomal subunit. The N-terminus interacts with L11 and the large rRNA to form the base of the stalk. The C-terminus forms an elongated spine to which L12 dimers bind in a sequential fashion forming a multimeric L10(L12)X complex.

Its function is as follows. Forms part of the ribosomal stalk, playing a central role in the interaction of the ribosome with GTP-bound translation factors. This chain is Large ribosomal subunit protein uL10, found in Phytoplasma mali (strain AT).